The chain runs to 56 residues: Large ribosomal subunit protein bL32 (56 aa).

Residues 1–37 (MAVQQNKKSRSRRDMRRSHDALTTAAISVDKASGEKH) form a disordered region. Basic residues predominate over residues 7-16 (KKSRSRRDMR).

This sequence belongs to the bacterial ribosomal protein bL32 family.

The polypeptide is Large ribosomal subunit protein bL32 (rpmF) (Pasteurella multocida (strain Pm70)).